The following is a 497-amino-acid chain: Aspartyl/glutamyl-tRNA(Asn/Gln) amidotransferase subunit B (497 aa).

This sequence belongs to the GatB/GatE family. GatB subfamily. As to quaternary structure, heterotrimer of A, B and C subunits.

The catalysed reaction is L-glutamyl-tRNA(Gln) + L-glutamine + ATP + H2O = L-glutaminyl-tRNA(Gln) + L-glutamate + ADP + phosphate + H(+). The enzyme catalyses L-aspartyl-tRNA(Asn) + L-glutamine + ATP + H2O = L-asparaginyl-tRNA(Asn) + L-glutamate + ADP + phosphate + 2 H(+). Its function is as follows. Allows the formation of correctly charged Asn-tRNA(Asn) or Gln-tRNA(Gln) through the transamidation of misacylated Asp-tRNA(Asn) or Glu-tRNA(Gln) in organisms which lack either or both of asparaginyl-tRNA or glutaminyl-tRNA synthetases. The reaction takes place in the presence of glutamine and ATP through an activated phospho-Asp-tRNA(Asn) or phospho-Glu-tRNA(Gln). This Rhodopirellula baltica (strain DSM 10527 / NCIMB 13988 / SH1) protein is Aspartyl/glutamyl-tRNA(Asn/Gln) amidotransferase subunit B.